The chain runs to 117 residues: UPF0122 protein Dred_2057 (117 aa).

This sequence belongs to the UPF0122 family.

Its function is as follows. Might take part in the signal recognition particle (SRP) pathway. This is inferred from the conservation of its genetic proximity to ftsY/ffh. May be a regulatory protein. This is UPF0122 protein Dred_2057 from Desulforamulus reducens (strain ATCC BAA-1160 / DSM 100696 / MI-1) (Desulfotomaculum reducens).